A 208-amino-acid chain; its full sequence is Large ribosomal subunit protein uL4 (208 aa).

The tract at residues 47-84 (ARAARERSDVARTGKKFGRQKGGGTARHGDRRAPVFIG) is disordered. Over residues 49–58 (AARERSDVAR) the composition is skewed to basic and acidic residues.

It belongs to the universal ribosomal protein uL4 family. In terms of assembly, part of the 50S ribosomal subunit.

Functionally, one of the primary rRNA binding proteins, this protein initially binds near the 5'-end of the 23S rRNA. It is important during the early stages of 50S assembly. It makes multiple contacts with different domains of the 23S rRNA in the assembled 50S subunit and ribosome. Its function is as follows. Forms part of the polypeptide exit tunnel. This chain is Large ribosomal subunit protein uL4, found in Rhizorhabdus wittichii (strain DSM 6014 / CCUG 31198 / JCM 15750 / NBRC 105917 / EY 4224 / RW1) (Sphingomonas wittichii).